The following is a 307-amino-acid chain: Aspartate carbamoyltransferase catalytic subunit (307 aa).

Carbamoyl phosphate contacts are provided by Arg56 and Thr57. L-aspartate is bound at residue Lys84. 3 residues coordinate carbamoyl phosphate: Arg106, His136, and Gln139. L-aspartate is bound by residues Arg169 and Arg221. Positions 262 and 263 each coordinate carbamoyl phosphate.

Belongs to the aspartate/ornithine carbamoyltransferase superfamily. ATCase family. As to quaternary structure, heterododecamer (2C3:3R2) of six catalytic PyrB chains organized as two trimers (C3), and six regulatory PyrI chains organized as three dimers (R2).

The catalysed reaction is carbamoyl phosphate + L-aspartate = N-carbamoyl-L-aspartate + phosphate + H(+). It functions in the pathway pyrimidine metabolism; UMP biosynthesis via de novo pathway; (S)-dihydroorotate from bicarbonate: step 2/3. In terms of biological role, catalyzes the condensation of carbamoyl phosphate and aspartate to form carbamoyl aspartate and inorganic phosphate, the committed step in the de novo pyrimidine nucleotide biosynthesis pathway. The polypeptide is Aspartate carbamoyltransferase catalytic subunit (Streptococcus pneumoniae (strain P1031)).